The sequence spans 543 residues: Cyclohexanone 1,2-monooxygenase (543 aa).

FAD contacts are provided by phenylalanine 16, aspartate 37, tryptophan 46, aspartate 57, tyrosine 63, and valine 110.

The protein belongs to the FAD-binding monooxygenase family. FAD serves as cofactor.

It carries out the reaction cyclohexanone + NADPH + O2 + H(+) = hexano-6-lactone + NADP(+) + H2O. The polypeptide is Cyclohexanone 1,2-monooxygenase (Acinetobacter sp).